The following is a 457-amino-acid chain: Siroheme synthase (457 aa).

Positions 1 to 204 are precorrin-2 dehydrogenase /sirohydrochlorin ferrochelatase; the sequence is MDHLPIFCQL…ADAKAVSEIT (204 aa). NAD(+)-binding positions include 22–23 and 43–44; these read DV and LA. Residue Ser-128 is modified to Phosphoserine. The uroporphyrinogen-III C-methyltransferase stretch occupies residues 216–457; the sequence is GEVVLVGAGP…RDKLNWFSNH (242 aa). An S-adenosyl-L-methionine-binding site is contributed by Pro-225. Asp-248 (proton acceptor) is an active-site residue. The active-site Proton donor is Lys-270. Residues 301–303, Ile-306, 331–332, Met-382, and Gly-411 each bind S-adenosyl-L-methionine; these read GGD and TA.

This sequence in the N-terminal section; belongs to the precorrin-2 dehydrogenase / sirohydrochlorin ferrochelatase family. In the C-terminal section; belongs to the precorrin methyltransferase family.

It carries out the reaction uroporphyrinogen III + 2 S-adenosyl-L-methionine = precorrin-2 + 2 S-adenosyl-L-homocysteine + H(+). It catalyses the reaction precorrin-2 + NAD(+) = sirohydrochlorin + NADH + 2 H(+). The enzyme catalyses siroheme + 2 H(+) = sirohydrochlorin + Fe(2+). The protein operates within cofactor biosynthesis; adenosylcobalamin biosynthesis; precorrin-2 from uroporphyrinogen III: step 1/1. It functions in the pathway cofactor biosynthesis; adenosylcobalamin biosynthesis; sirohydrochlorin from precorrin-2: step 1/1. Its pathway is porphyrin-containing compound metabolism; siroheme biosynthesis; precorrin-2 from uroporphyrinogen III: step 1/1. It participates in porphyrin-containing compound metabolism; siroheme biosynthesis; siroheme from sirohydrochlorin: step 1/1. The protein operates within porphyrin-containing compound metabolism; siroheme biosynthesis; sirohydrochlorin from precorrin-2: step 1/1. In terms of biological role, multifunctional enzyme that catalyzes the SAM-dependent methylations of uroporphyrinogen III at position C-2 and C-7 to form precorrin-2 via precorrin-1. Then it catalyzes the NAD-dependent ring dehydrogenation of precorrin-2 to yield sirohydrochlorin. Finally, it catalyzes the ferrochelation of sirohydrochlorin to yield siroheme. The polypeptide is Siroheme synthase (Citrobacter koseri (strain ATCC BAA-895 / CDC 4225-83 / SGSC4696)).